Reading from the N-terminus, the 101-residue chain is Acid shock protein (101 aa).

The signal sequence occupies residues 1–21 (MKKVLALVVAAAMGLSSAAFA). Residues 22–59 (AETTATAAPAASTAAPAKTVHHKKHHKAAKPAAEQKAQ) constitute a propeptide that is removed on maturation. Residues 26–39 (ATAAPAASTAAPAK) are compositionally biased toward low complexity. The tract at residues 26–101 (ATAAPAASTA…AAKPAAQPAA (76 aa)) is disordered. 3 stretches are compositionally biased toward basic residues: residues 40-50 (TVHHKKHHKAA), 60-69 (AAKKHHKKAA), and 79-88 (AAKKHHKKAA).

The protein belongs to the Asr family. Proteolytic processing gives rise to the active protein.

It is found in the periplasm. Required for growth and/or survival at acidic conditions. The chain is Acid shock protein (asr) from Enterobacter cloacae.